Consider the following 324-residue polypeptide: MISIDPQFIKNFSKKVKQFDKFSLFVHVNPDFDAFGSAFAFKTFLNTFFSEKKAYVMGSYNINADGRELFPFEQTDINDDFVKESLAIIFDTSNQERVLTQKHKLAKETVRIDHHPRTEKFADMEWIDSSFSATAEMIGYLILQMGYKLNDEIASYLYAGIITDTQRFWGPTTTPQTFALTAKLMETGFNRNKVHDAVYLKPLLEHKYFSYVLSKAKITKNGLAYALIKKGAYKHFGVVSPLPMVHALNNIKGVKIWTTVYFNESIKKWIGSIRSRNIPINNFAQMFNGGGHKYAAAFVLDEKNQFMKLVQIMDDFLAKQNENS.

Belongs to the mgp1/MG371 family.

This is an uncharacterized protein from Mycoplasma genitalium (strain ATCC 33530 / DSM 19775 / NCTC 10195 / G37) (Mycoplasmoides genitalium).